The chain runs to 766 residues: FYVE, RhoGEF and PH domain-containing protein 4 (766 aa).

The interval 1-150 (MEESNPAPTS…SSVTNSHDEN (150 aa)) is actin filament-binding. Composition is skewed to polar residues over residues 43 to 65 (STMN…TPQK), 132 to 145 (RNET…SVTN), and 152 to 161 (CDSSCRTQGT). The disordered stretch occupies residues 43–167 (STMNLNIPQT…TQGTDLGLPS (125 aa)). Residues 206 to 393 (KLHKIATELL…STAASHSNSA (188 aa)) enclose the DH domain. A PH 1 domain is found at 422–521 (ELIKEGQILK…WIKALQESID (100 aa)). The FYVE-type zinc-finger motif lies at 559-619 (DNEVTMCMKC…VCKDCYQIMS (61 aa)). Zn(2+) is bound by residues cysteine 565, cysteine 568, cysteine 582, cysteine 585, cysteine 590, cysteine 593, cysteine 611, and cysteine 614. The region spanning 643-740 (NSEVCSFLQY…WLKIILLAVT (98 aa)) is the PH 2 domain. Residues serine 702 and serine 716 each carry the phosphoserine modification. The disordered stretch occupies residues 745 to 766 (DGPSEHLDTLDNLPGPKEKSEC).

As to quaternary structure, homooligomer. As to expression, detected in brain, lung, liver, skeletal muscle, kidney, testis and cultured hippocampal neurons.

The protein resides in the cytoplasm. It is found in the cytoskeleton. Its subcellular location is the cell projection. The protein localises to the filopodium. Activates CDC42, a member of the Ras-like family of Rho- and Rac proteins, by exchanging bound GDP for free GTP. Plays a role in regulating the actin cytoskeleton and cell shape. Activates MAPK8. The polypeptide is FYVE, RhoGEF and PH domain-containing protein 4 (Fgd4) (Rattus norvegicus (Rat)).